A 451-amino-acid chain; its full sequence is Glycylpeptide N-tetradecanoyltransferase (451 aa).

Residues 177-179 (LCI) and 185-189 (NKRLA) contribute to the tetradecanoyl-CoA site. Leu-451 serves as the catalytic Proton acceptor; via carboxylate.

Belongs to the NMT family. As to quaternary structure, monomer.

It is found in the cytoplasm. The enzyme catalyses N-terminal glycyl-[protein] + tetradecanoyl-CoA = N-tetradecanoylglycyl-[protein] + CoA + H(+). Competitively inhibited by SC-58272, a peptidomimetic derived from the N-terminal sequence of a natural substrate. Adds a myristoyl group to the N-terminal glycine residue of certain cellular proteins. Substrate specificity requires an N-terminal glycine in the nascent polypeptide substrates. Ser is present at position 5 in almost all known N-myristoyl proteins and Lys is commonly encountered at postion 6. Basic residues are preferred at positions 7 and 8. The protein is Glycylpeptide N-tetradecanoyltransferase (NMT1) of Candida albicans (strain SC5314 / ATCC MYA-2876) (Yeast).